Consider the following 1816-residue polypeptide: uncharacterized protein (1816 aa).

Disordered stretches follow at residues 338–357 (DSSS…NNNN) and 562–605 (ELEK…IKPK). A compositionally biased stretch (low complexity) spans 339-357 (SSSSSSNNNNNNNNNNNNN). Positions 562–577 (ELEKERIKKEKEDSKK) are enriched in basic and acidic residues. Residues 581-603 (KQSSSSSSSSTTTTSTTTSSTIK) are compositionally biased toward low complexity. The Helicase ATP-binding domain occupies 826–999 (LDIVDKRESA…FLKKIDPNRK (174 aa)). 839–846 (ASTSSGKT) contacts ATP. The DEAH box signature appears at 949–952 (DEVH). A Helicase C-terminal domain is found at 1198-1379 (QLDLVIERFQ…SVVSPSLCLS (182 aa)). A disordered region spans residues 1388–1487 (TNGSANKSNE…TTTKTPTTTS (100 aa)). A compositionally biased stretch (basic and acidic residues) spans 1395 to 1427 (SNEENKVQVKENEKEREKEKEKEKEKEKEKETI). Acidic residues predominate over residues 1445–1454 (NWDDDEEETA). A compositionally biased stretch (low complexity) spans 1456–1487 (STKTTPATTPTTTTTENTPATTTTTKTPTTTS).

It belongs to the helicase family. SKI2 subfamily.

The protein localises to the nucleus. This is an uncharacterized protein from Dictyostelium discoideum (Social amoeba).